We begin with the raw amino-acid sequence, 348 residues long: Anthranilate phosphoribosyltransferase (348 aa).

Residues Gly81, Gly84–Asp85, Thr89, Asn91–Thr94, Lys109–Ser117, and Ser121 contribute to the 5-phospho-alpha-D-ribose 1-diphosphate site. An anthranilate-binding site is contributed by Gly81. Ser93 is a Mg(2+) binding site. An anthranilate-binding site is contributed by Asn112. Arg167 is an anthranilate binding site. Mg(2+) is bound by residues Asp226 and Glu227.

This sequence belongs to the anthranilate phosphoribosyltransferase family. As to quaternary structure, homodimer. Mg(2+) is required as a cofactor.

It catalyses the reaction N-(5-phospho-beta-D-ribosyl)anthranilate + diphosphate = 5-phospho-alpha-D-ribose 1-diphosphate + anthranilate. Its pathway is amino-acid biosynthesis; L-tryptophan biosynthesis; L-tryptophan from chorismate: step 2/5. Its function is as follows. Catalyzes the transfer of the phosphoribosyl group of 5-phosphorylribose-1-pyrophosphate (PRPP) to anthranilate to yield N-(5'-phosphoribosyl)-anthranilate (PRA). The chain is Anthranilate phosphoribosyltransferase from Thermomicrobium roseum (strain ATCC 27502 / DSM 5159 / P-2).